The primary structure comprises 169 residues: ATP synthase subunit b (169 aa).

The helical transmembrane segment at 12–32 threads the bilayer; it reads PSVGLIFWKTVAFLIFLYILY. The tract at residues 69–107 is disordered; the sequence is AENEEARREAEQKAQQILREARDSAEELREEEKAKTRRE. Residues 87–107 are compositionally biased toward basic and acidic residues; it reads REARDSAEELREEEKAKTRRE.

Belongs to the ATPase B chain family. F-type ATPases have 2 components, F(1) - the catalytic core - and F(0) - the membrane proton channel. F(1) has five subunits: alpha(3), beta(3), gamma(1), delta(1), epsilon(1). F(0) has three main subunits: a(1), b(2) and c(10-14). The alpha and beta chains form an alternating ring which encloses part of the gamma chain. F(1) is attached to F(0) by a central stalk formed by the gamma and epsilon chains, while a peripheral stalk is formed by the delta and b chains.

The protein resides in the cell inner membrane. In terms of biological role, f(1)F(0) ATP synthase produces ATP from ADP in the presence of a proton or sodium gradient. F-type ATPases consist of two structural domains, F(1) containing the extramembraneous catalytic core and F(0) containing the membrane proton channel, linked together by a central stalk and a peripheral stalk. During catalysis, ATP synthesis in the catalytic domain of F(1) is coupled via a rotary mechanism of the central stalk subunits to proton translocation. Functionally, component of the F(0) channel, it forms part of the peripheral stalk, linking F(1) to F(0). This chain is ATP synthase subunit b, found in Salinibacter ruber (strain DSM 13855 / M31).